The chain runs to 1282 residues: Trafficking protein particle complex subunit 8 (1282 aa).

The segment at 245 to 287 (TDAIAPGPNGASNQQSPSSPTSSVATISSTMPAVGSVSPNSHP) is disordered. The span at 255–273 (ASNQQSPSSPTSSVATISS) shows a compositional bias: low complexity.

Its function is as follows. Plays a role in endoplasmic reticulum to Golgi apparatus trafficking at a very early stage. Involved in collagen secretion. The protein is Trafficking protein particle complex subunit 8 of Caenorhabditis elegans.